The chain runs to 1096 residues: Lysine-specific demethylase PHF2 (1096 aa).

A PHD-type zinc finger spans residues 5 to 56 (PVYCVCRLPYDVTRFMIECDACKDWFHGSCVGVEEEEAPDIDIYHCPNCEKT). Residues threonine 193 and threonine 246 each contribute to the 2-oxoglutarate site. The JmjC domain maps to 197–353 (FSDTRMSSFV…MQMRAYEVER (157 aa)). 2 residues coordinate Fe cation: histidine 249 and aspartate 251. Residues tyrosine 259, lysine 266, tyrosine 321, and threonine 323 each coordinate 2-oxoglutarate. Tyrosine 321 contributes to the Fe cation binding site. Disordered stretches follow at residues 447 to 634 (KAVR…KDNK) and 646 to 674 (GSKALRPPTSPGVFGALQNFKEDKPKPVR). Serine 474 is modified (phosphoserine). Phosphothreonine is present on threonine 479. The span at 503–518 (SKIPKPPKPPKPPRPP) shows a compositional bias: pro residues. Position 539 is a phosphoserine (serine 539). 2 stretches are compositionally biased toward basic and acidic residues: residues 548–563 (LEAHTKEALTKMEPPK) and 578–624 (DVVH…KLEK). Serine 655 is modified (phosphoserine). The span at 665 to 674 (FKEDKPKPVR) shows a compositional bias: basic and acidic residues. Phosphoserine occurs at positions 681 and 705. A Glycyl lysine isopeptide (Lys-Gly) (interchain with G-Cter in SUMO2) cross-link involves residue lysine 711. 3 disordered regions span residues 719 to 799 (TKPK…QGML), 817 to 846 (AGQAKGSSLAAHGARKNGGGSGKSAGKRLL), and 877 to 1078 (YPSL…MATA). Lysine 720 is subject to N6-acetyllysine. Tyrosine 728 carries the phosphotyrosine modification. Over residues 729-757 (KSDDSSDEGSLHIDTDTKPGRNARVKKES) the composition is skewed to basic and acidic residues. 4 positions are modified to phosphoserine: serine 730, serine 733, serine 734, and serine 738. Residues serine 879, serine 882, and serine 899 each carry the phosphoserine modification. Residues 916 to 925 (RQDRPVREGT) are compositionally biased toward basic and acidic residues. Residues 949-959 (SKKKKSAKRKL) are compositionally biased toward basic residues. 2 stretches are compositionally biased toward low complexity: residues 960 to 1009 (TPNT…EGSS) and 1027 to 1040 (TAAGTFTGAQAGRT). A compositionally biased stretch (polar residues) spans 1053–1065 (RRPSASSPNNNTA). Serine 1056 carries the post-translational modification Phosphoserine; by PKA.

The protein belongs to the JHDM1 histone demethylase family. JHDM1D subfamily. In terms of assembly, component of the PHF2-ARID5B complex, at least composed of PHF2 and ARID5B. Interacts with HNF4A and NR1H4. Interacts with RELA. Post-translationally, phosphorylated by PKA on specific serine residues, leading to the formation of an active lysine demethylase complex. As to expression, widely expressed, including in liver (at protein level).

It is found in the nucleus. It localises to the nucleolus. Its subcellular location is the chromosome. The protein localises to the centromere. The protein resides in the kinetochore. The enzyme catalyses N(6),N(6)-dimethyl-L-lysyl(9)-[histone H3] + 2-oxoglutarate + O2 = N(6)-methyl-L-lysyl(9)-[histone H3] + formaldehyde + succinate + CO2. Its activity is regulated as follows. Enzymatically inactive by itself, and become active following phosphorylation by PKA. Lysine demethylase that demethylates both histones and non-histone proteins. Enzymatically inactive by itself, and becomes active following phosphorylation by PKA: forms a complex with ARID5B and mediates demethylation of methylated ARID5B. Demethylation of ARID5B leads to target the PHF2-ARID5B complex to target promoters, where PHF2 mediates demethylation of dimethylated 'Lys-9' of histone H3 (H3K9me2), followed by transcription activation of target genes. The PHF2-ARID5B complex acts as a coactivator of HNF4A in liver. PHF2 is recruited to trimethylated 'Lys-4' of histone H3 (H3K4me3) at rDNA promoters and promotes expression of rDNA. Involved in the activation of toll-like receptor 4 (TLR4)-target inflammatory genes in macrophages by catalyzing the demethylation of trimethylated histone H4 lysine 20 (H4K20me3) at the gene promoters. The chain is Lysine-specific demethylase PHF2 from Homo sapiens (Human).